The chain runs to 371 residues: Bifunctional enzyme IspD/IspF (371 aa).

Positions 1 to 212 (MKDITLVLLA…FDFTPASGTI (212 aa)) are 2-C-methyl-D-erythritol 4-phosphate cytidylyltransferase. The tract at residues 213-371 (FTGNGFDVHA…NLGYFDWRKF (159 aa)) is 2-C-methyl-D-erythritol 2,4-cyclodiphosphate synthase. Aspartate 219 and histidine 221 together coordinate a divalent metal cation. 4-CDP-2-C-methyl-D-erythritol 2-phosphate-binding positions include 219 to 221 (DVH) and 245 to 246 (HS). Histidine 253 is a binding site for a divalent metal cation. 4-CDP-2-C-methyl-D-erythritol 2-phosphate contacts are provided by residues 267–269 (DIG), 272–276 (FPDTD), 341–344 (STTE), phenylalanine 348, and arginine 351.

It in the N-terminal section; belongs to the IspD/TarI cytidylyltransferase family. IspD subfamily. This sequence in the C-terminal section; belongs to the IspF family. Requires a divalent metal cation as cofactor.

It catalyses the reaction 2-C-methyl-D-erythritol 4-phosphate + CTP + H(+) = 4-CDP-2-C-methyl-D-erythritol + diphosphate. The catalysed reaction is 4-CDP-2-C-methyl-D-erythritol 2-phosphate = 2-C-methyl-D-erythritol 2,4-cyclic diphosphate + CMP. It participates in isoprenoid biosynthesis; isopentenyl diphosphate biosynthesis via DXP pathway; isopentenyl diphosphate from 1-deoxy-D-xylulose 5-phosphate: step 2/6. It functions in the pathway isoprenoid biosynthesis; isopentenyl diphosphate biosynthesis via DXP pathway; isopentenyl diphosphate from 1-deoxy-D-xylulose 5-phosphate: step 4/6. Functionally, bifunctional enzyme that catalyzes the formation of 4-diphosphocytidyl-2-C-methyl-D-erythritol from CTP and 2-C-methyl-D-erythritol 4-phosphate (MEP) (IspD), and catalyzes the conversion of 4-diphosphocytidyl-2-C-methyl-D-erythritol 2-phosphate (CDP-ME2P) to 2-C-methyl-D-erythritol 2,4-cyclodiphosphate (ME-CPP) with a corresponding release of cytidine 5-monophosphate (CMP) (IspF). This chain is Bifunctional enzyme IspD/IspF, found in Campylobacter hominis (strain ATCC BAA-381 / DSM 21671 / CCUG 45161 / LMG 19568 / NCTC 13146 / CH001A).